The following is a 329-amino-acid chain: Eukaryotic translation initiation factor 3 subunit I (329 aa).

WD repeat units lie at residues 8-47, 50-89, 145-184, 187-226, and 284-323; these read GHQR…RLGT, GHGG…NIAT, ITDS…KIHS, EHTH…LLKE, and GHFG…FDYT.

It belongs to the eIF-3 subunit I family. As to quaternary structure, component of the eukaryotic translation initiation factor 3 (eIF-3) complex.

The protein resides in the cytoplasm. In terms of biological role, component of the eukaryotic translation initiation factor 3 (eIF-3) complex, which is involved in protein synthesis of a specialized repertoire of mRNAs and, together with other initiation factors, stimulates binding of mRNA and methionyl-tRNAi to the 40S ribosome. The eIF-3 complex specifically targets and initiates translation of a subset of mRNAs involved in cell proliferation. The protein is Eukaryotic translation initiation factor 3 subunit I of Bombyx mori (Silk moth).